The primary structure comprises 108 residues: Small ribosomal subunit protein uS17 (108 aa).

This sequence belongs to the universal ribosomal protein uS17 family. Part of the 30S ribosomal subunit.

One of the primary rRNA binding proteins, it binds specifically to the 5'-end of 16S ribosomal RNA. The sequence is that of Small ribosomal subunit protein uS17 from Methanospirillum hungatei JF-1 (strain ATCC 27890 / DSM 864 / NBRC 100397 / JF-1).